Here is a 375-residue protein sequence, read N- to C-terminus: DNA replication and repair protein RecF (375 aa).

Position 30–37 (30–37 (GNNGSGKS)) interacts with ATP.

It belongs to the RecF family.

The protein localises to the cytoplasm. The RecF protein is involved in DNA metabolism; it is required for DNA replication and normal SOS inducibility. RecF binds preferentially to single-stranded, linear DNA. It also seems to bind ATP. This is DNA replication and repair protein RecF from Hahella chejuensis (strain KCTC 2396).